Reading from the N-terminus, the 494-residue chain is UDP-glucose 6-dehydrogenase (494 aa).

NAD(+) contacts are provided by residues 11-16, aspartate 36, arginine 41, and 89-93; these read GAGYVG and VNTPT. The segment at 88–110 is disordered; sequence SVNTPTKTYGMGKGRAADLKYIE. N6-acetyllysine is present on lysine 107. Positions 129–135 are allosteric switch region; the sequence is KSTVPVR. Position 130-132 (130-132) interacts with NAD(+); the sequence is STV. The active-site Proton donor/acceptor is glutamate 161. Residues 161–165, 220–224, arginine 260, and 267–273 contribute to the substrate site; these read EFLAE, KLTAN, and KASVGFG. NAD(+) is bound at residue glutamate 165. Lysine 220 (proton donor/acceptor) is an active-site residue. Cysteine 276 (nucleophile) is an active-site residue. 276-279 contacts NAD(+); it reads CFQK. Residues 321-325 form an important for formation of active hexamer structure region; that stretch reads SLFNT. Residue 338 to 339 coordinates substrate; the sequence is FK. An NAD(+)-binding site is contributed by arginine 346. A substrate-binding site is contributed by arginine 442. The interval 466 to 494 is disordered; it reads VSSKRIPYAPSGEIPKFSLQDMPNKKPRV. Serine 476 carries the phosphoserine modification.

Belongs to the UDP-glucose/GDP-mannose dehydrogenase family. In terms of assembly, homohexamer.

The enzyme catalyses UDP-alpha-D-glucose + 2 NAD(+) + H2O = UDP-alpha-D-glucuronate + 2 NADH + 3 H(+). Its pathway is nucleotide-sugar biosynthesis; UDP-alpha-D-glucuronate biosynthesis; UDP-alpha-D-glucuronate from UDP-alpha-D-glucose: step 1/1. UDP-alpha-D-xylose (UDX) acts as a feedback inhibitor. It binds at the same site as the substrate, but functions as allosteric inhibitor by triggering a conformation change that disrupts the active hexameric ring structure and gives rise to an inactive, horseshoe-shaped hexamer. In terms of biological role, catalyzes the formation of UDP-alpha-D-glucuronate, a constituent of complex glycosaminoglycans. Required for the biosynthesis of chondroitin sulfate and heparan sulfate. Required for embryonic development via its role in the biosynthesis of glycosaminoglycans. Required for proper brain and neuronal development. This Bos taurus (Bovine) protein is UDP-glucose 6-dehydrogenase (UGDH).